The following is an 80-amino-acid chain: RNA-binding protein Hfq (80 aa).

The Sm domain maps to 9–69 (DVFLNQVRKE…VSTISPNSPV (61 aa)).

Belongs to the Hfq family. In terms of assembly, homohexamer.

Its function is as follows. RNA chaperone that binds small regulatory RNA (sRNAs) and mRNAs to facilitate mRNA translational regulation in response to envelope stress, environmental stress and changes in metabolite concentrations. Also binds with high specificity to tRNAs. The chain is RNA-binding protein Hfq from Alkaliphilus oremlandii (strain OhILAs) (Clostridium oremlandii (strain OhILAs)).